The primary structure comprises 170 residues: Lipoprotein signal peptidase (170 aa).

4 consecutive transmembrane segments (helical) span residues 11–31, 41–61, 69–89, and 95–115; these read LGWLWLSVLVLVIDQVSKLHF, IVVIPDYFSWTLAYNTGAAFS, WQRWLFALIAIAVSAVLVVWL, and NETWLAIALALVLGGALGNLY. Residues aspartate 125 and aspartate 144 contribute to the active site. A helical transmembrane segment spans residues 136-156; the sequence is YFPAFNFADSAITVGAVMLAL.

This sequence belongs to the peptidase A8 family.

The protein resides in the cell inner membrane. The catalysed reaction is Release of signal peptides from bacterial membrane prolipoproteins. Hydrolyzes -Xaa-Yaa-Zaa-|-(S,diacylglyceryl)Cys-, in which Xaa is hydrophobic (preferably Leu), and Yaa (Ala or Ser) and Zaa (Gly or Ala) have small, neutral side chains.. Its pathway is protein modification; lipoprotein biosynthesis (signal peptide cleavage). In terms of biological role, this protein specifically catalyzes the removal of signal peptides from prolipoproteins. The chain is Lipoprotein signal peptidase from Pseudomonas fluorescens (strain ATCC BAA-477 / NRRL B-23932 / Pf-5).